The sequence spans 313 residues: Homoserine O-succinyltransferase (313 aa).

C142 acts as the Acyl-thioester intermediate in catalysis. Residues K163 and S192 each contribute to the substrate site. The active-site Proton acceptor is H235. Residue E237 is part of the active site. R249 contacts substrate.

The protein belongs to the MetA family.

It is found in the cytoplasm. The catalysed reaction is L-homoserine + succinyl-CoA = O-succinyl-L-homoserine + CoA. It participates in amino-acid biosynthesis; L-methionine biosynthesis via de novo pathway; O-succinyl-L-homoserine from L-homoserine: step 1/1. Its function is as follows. Transfers a succinyl group from succinyl-CoA to L-homoserine, forming succinyl-L-homoserine. The sequence is that of Homoserine O-succinyltransferase from Vibrio parahaemolyticus serotype O3:K6 (strain RIMD 2210633).